We begin with the raw amino-acid sequence, 401 residues long: Nicotinate phosphoribosyltransferase (401 aa).

His221 carries the post-translational modification Phosphohistidine; by autocatalysis.

The protein belongs to the NAPRTase family. Post-translationally, transiently phosphorylated on a His residue during the reaction cycle. Phosphorylation strongly increases the affinity for substrates and increases the rate of nicotinate D-ribonucleotide production. Dephosphorylation regenerates the low-affinity form of the enzyme, leading to product release.

The enzyme catalyses nicotinate + 5-phospho-alpha-D-ribose 1-diphosphate + ATP + H2O = nicotinate beta-D-ribonucleotide + ADP + phosphate + diphosphate. It functions in the pathway cofactor biosynthesis; NAD(+) biosynthesis; nicotinate D-ribonucleotide from nicotinate: step 1/1. Catalyzes the synthesis of beta-nicotinate D-ribonucleotide from nicotinate and 5-phospho-D-ribose 1-phosphate at the expense of ATP. This chain is Nicotinate phosphoribosyltransferase, found in Yersinia enterocolitica serotype O:8 / biotype 1B (strain NCTC 13174 / 8081).